Here is a 322-residue protein sequence, read N- to C-terminus: Transcription factor Atoh8 (322 aa).

Disordered stretches follow at residues 77 to 96 (PVPASVAPAVPPGGGTDTAR), 101 to 144 (IRAP…EAHS), and 159 to 221 (PPAR…ATAA). Over residues 101-111 (IRAPEVSDARK) the composition is skewed to basic and acidic residues. The interval 231–244 (TRRLLANARERTRV) is basic motif; degenerate. The bHLH domain occupies 231–283 (TRRLLANARERTRVHTISAAFEALRKQVPCYSYGQKLSKLAILRIACNYILSL). Positions 245 to 283 (HTISAAFEALRKQVPCYSYGQKLSKLAILRIACNYILSL) are helix-loop-helix motif.

In terms of assembly, efficient DNA binding requires dimerization with another bHLH protein. Interacts with NEUROG3 and NEUROD1. Interacts with ZFPM2; mediates indirect interaction with GATA4. Forms a heterodimer with TCF3; repress transcription of TCF3 and TCF3/NEUROG3 dimer-induced transactivation of E box-dependent promoters. In terms of tissue distribution, expressed by subsets of mature neurons. Expressed in kidney (podocytes). Expression is restricted to the atria, lung mesenchyme, and vascular smooth muscle.

The protein resides in the nucleus. It localises to the nucleus speckle. The protein localises to the cytoplasm. Transcription factor that binds a palindromic (canonical) core consensus DNA sequence 5'-CANNTG- 3' known as an E-box element, possibly as a heterodimer with other bHLH proteins. Regulates endothelial cell proliferation, migration and tube-like structures formation. Modulates endothelial cell differentiation through NOS3. May be implicated in specification and differentiation of neuronal cell lineages in the brain. May participate in kidney development and may be involved in podocyte differentiation. During early embryonic development is involved in tissue-specific differentiation processes that are dependent on class II bHLH factors and namely modulates the differentiation program initiated by the pro-endocrine factor NEUROG3. During myogenesis, may play a role during the transition of myoblasts from the proliferative phase to the differentiation phase. Positively regulates HAMP transcription in two ways, firstly by acting directly on the HAMP promoter via E-boxes binding and indirectly through increased phosphorylation of SMAD protein complex. Repress NEUROG3-dependent gene activation in a gene-specific manner through at least two mechanisms; requires only either the sequestering of a general partner such as TCF3 through heterodimerization, either also requires binding of the bHLH domain to DNA via a basic motif. This is Transcription factor Atoh8 from Mus musculus (Mouse).